Reading from the N-terminus, the 122-residue chain is Large ribosomal subunit protein uL14 (122 aa).

Belongs to the universal ribosomal protein uL14 family. As to quaternary structure, part of the 50S ribosomal subunit. Forms a cluster with proteins L3 and L19. In the 70S ribosome, L14 and L19 interact and together make contacts with the 16S rRNA in bridges B5 and B8.

Its function is as follows. Binds to 23S rRNA. Forms part of two intersubunit bridges in the 70S ribosome. This is Large ribosomal subunit protein uL14 from Solidesulfovibrio magneticus (strain ATCC 700980 / DSM 13731 / RS-1) (Desulfovibrio magneticus).